Consider the following 523-residue polypeptide: Alpha,alpha-trehalose-phosphate synthase [UDP-forming] (523 aa).

Tyr98 and Asp152 together coordinate D-glucose 6-phosphate. 2 residues coordinate UDP: Arg288 and Lys293. UDP-alpha-D-glucose is bound by residues Arg288 and Lys293. Residue Arg326 coordinates D-glucose 6-phosphate. 387–395 (DGMNLVSYE) contributes to the UDP-alpha-D-glucose binding site. Residue 391 to 395 (LVSYE) coordinates UDP. The interval 503 to 523 (QQFNLGEQREEGRLEPGEFDD) is disordered. Residues 509–523 (EQREEGRLEPGEFDD) show a composition bias toward basic and acidic residues.

This sequence belongs to the glycosyltransferase 20 family.

The catalysed reaction is D-glucose 6-phosphate + UDP-alpha-D-glucose = alpha,alpha-trehalose 6-phosphate + UDP + H(+). The protein operates within carbohydrate biosynthesis. In terms of biological role, synthase catalytic subunit of the trehalose synthase complex that catalyzes the production of trehalose from glucose-6-phosphate and UDP-alpha-D-glucose in a two step process. The disaccharide trehalose serves as a storage carbohydrate that is mobilized during conidial germination. Trehalose also serves as a protectant for cell integrity during stress. This chain is Alpha,alpha-trehalose-phosphate synthase [UDP-forming], found in Botryotinia fuckeliana (strain B05.10) (Noble rot fungus).